The chain runs to 82 residues: Zinc finger CCCH domain-containing protein 13 (82 aa).

2 consecutive C3H1-type zinc fingers follow at residues 9–37 (RPGE…HPKN) and 55–82 (RPGQ…DHFT).

This Arabidopsis thaliana (Mouse-ear cress) protein is Zinc finger CCCH domain-containing protein 13.